The chain runs to 518 residues: E3 ubiquitin-protein ligase TRIM39 (518 aa).

Residues 29 to 70 form an RING-type zinc finger; the sequence is CSVCLEYLKEPVIIECGHNFCKACITRWWEDLERDFPCPVCR. A B box-type zinc finger spans residues 102–143; that stretch reads RDESLCPQHHEALSLFCYEDQEAVCLICAISHTHRAHTVVPL. Zn(2+) is bound by residues cysteine 107, histidine 110, cysteine 129, and histidine 135. A coiled-coil region spans residues 181–250; it reads ELKRLVESRR…AHLAAEVEGK (70 aa). Interaction with CDKN1A regions lie at residues 268–337 and 389–518; these read KNIP…QLIA and TSGR…TDWE. One can recognise a B30.2/SPRY domain in the interval 319–514; the sequence is SNFPRQYFAL…NAAPLTIRPP (196 aa).

It belongs to the TRIM/RBCC family. As to quaternary structure, interacts with MOAP1. Interacts with CDKN1A. Post-translationally, autoubiquitinated.

It localises to the cytoplasm. It is found in the cytosol. The protein localises to the mitochondrion. The protein resides in the nucleus. The catalysed reaction is S-ubiquitinyl-[E2 ubiquitin-conjugating enzyme]-L-cysteine + [acceptor protein]-L-lysine = [E2 ubiquitin-conjugating enzyme]-L-cysteine + N(6)-ubiquitinyl-[acceptor protein]-L-lysine.. Its pathway is protein modification; protein ubiquitination. In terms of biological role, E3 ubiquitin-protein ligase. May facilitate apoptosis by inhibiting APC/C-Cdh1-mediated poly-ubiquitination and subsequent proteasome-mediated degradation of the pro-apoptotic protein MOAP1. Regulates the G1/S transition of the cell cycle and DNA damage-induced G2 arrest by stabilizing CDKN1A/p21. Positively regulates CDKN1A/p21 stability by competing with DTL for CDKN1A/p21 binding, therefore disrupting DCX(DTL) E3 ubiquitin ligase complex-mediated CDKN1A/p21 ubiquitination and degradation. This chain is E3 ubiquitin-protein ligase TRIM39 (TRIM39), found in Pan troglodytes (Chimpanzee).